The following is a 205-amino-acid chain: Transcription antitermination protein NusB (205 aa).

It belongs to the NusB family.

Involved in transcription antitermination. Required for transcription of ribosomal RNA (rRNA) genes. Binds specifically to the boxA antiterminator sequence of the ribosomal RNA (rrn) operons. This Acaryochloris marina (strain MBIC 11017) protein is Transcription antitermination protein NusB.